A 419-amino-acid polypeptide reads, in one-letter code: Prolyl hydroxylase EGLN2 (419 aa).

Composition is skewed to low complexity over residues 1–18 and 64–73; these read MDSP…PQLP and TTATATTTTA. Disordered stretches follow at residues 1-89 and 108-181; these read MDSP…GELW and AAQG…REEV. A Bipartite nuclear localization signal motif is present at residues 89 to 134; the sequence is WPLQSEGAAALVTKECQRLAAQGARPEAPKRKWAKDGGDAPSPSKR. The span at 115–126 shows a compositional bias: basic and acidic residues; it reads EAPKRKWAKDGG. Phosphoserine is present on serine 130. A compositionally biased stretch (low complexity) spans 154 to 174; the sequence is SGASNSSSSSSNTTSSSGEAS. The interval 237-247 is beta(2)beta(3) 'finger-like' loop; sequence VSQRAIPPRSI. Residues 290 to 388 enclose the Fe2OG dioxygenase domain; sequence GRTKAMVACY…RYAITVWYFD (99 aa). Histidine 309, aspartate 311, and histidine 370 together coordinate Fe cation. Arginine 379 contacts 2-oxoglutarate.

In terms of assembly, interacts with E3 ligase SIAH2. Interacts with LIMD1, WTIP and AJUBA. Fe(2+) serves as cofactor. Requires L-ascorbate as cofactor. Post-translationally, ubiquitinated by SIAH1 and/or SIAH2 in response to the unfolded protein response (UPR), leading to its degradation. As to expression, highly expressed in testis, expression was also detected in the heart brain, liver kidney and lung. Expression was lowest in spleen and skeletal muscle. Constitutively expressed during differentiation of C2C12 skeletal myocytes.

It localises to the nucleus. It carries out the reaction L-prolyl-[protein] + 2-oxoglutarate + O2 = trans-4-hydroxy-L-prolyl-[protein] + succinate + CO2. The catalysed reaction is L-prolyl-[hypoxia-inducible factor alpha subunit] + 2-oxoglutarate + O2 = trans-4-hydroxy-L-prolyl-[hypoxia-inducible factor alpha subunit] + succinate + CO2. Its function is as follows. Prolyl hydroxylase that mediates hydroxylation of proline residues in target proteins, such as ATF4, IKBKB, CEP192 and HIF1A. Target proteins are preferentially recognized via a LXXLAP motif. Cellular oxygen sensor that catalyzes, under normoxic conditions, the post-translational formation of 4-hydroxyproline in hypoxia-inducible factor (HIF) alpha proteins. Hydroxylates a specific proline found in each of the oxygen-dependent degradation (ODD) domains (N-terminal, NODD, and C-terminal, CODD) of HIF1A. Also hydroxylates HIF2A. Has a preference for the CODD site for both HIF1A and HIF2A. Hydroxylated HIFs are then targeted for proteasomal degradation via the von Hippel-Lindau ubiquitination complex. Under hypoxic conditions, the hydroxylation reaction is attenuated allowing HIFs to escape degradation resulting in their translocation to the nucleus, heterodimerization with HIF1B, and increased expression of hypoxy-inducible genes. EGLN2 is involved in regulating hypoxia tolerance and apoptosis in cardiac and skeletal muscle. Also regulates susceptibility to normoxic oxidative neuronal death. Links oxygen sensing to cell cycle and primary cilia formation by hydroxylating the critical centrosome component CEP192 which promotes its ubiquitination and subsequent proteasomal degradation. Hydroxylates IKBKB, mediating NF-kappa-B activation in hypoxic conditions. Also mediates hydroxylation of ATF4, leading to decreased protein stability of ATF4. This chain is Prolyl hydroxylase EGLN2, found in Mus musculus (Mouse).